The chain runs to 176 residues: UBA-like domain-containing protein 1 (176 aa).

The disordered stretch occupies residues 87–176; that stretch reads SESFHGGGGS…RAHPAMEAER (90 aa). A compositionally biased stretch (low complexity) spans 120–137; that stretch reads TPSWPTAASPPGGPQQHQ. The span at 138 to 150 shows a compositional bias: pro residues; it reads PQPPLWTPAPPSP. Basic and acidic residues predominate over residues 166-176; it reads PRAHPAMEAER.

This sequence belongs to the UBALD family.

The polypeptide is UBA-like domain-containing protein 1 (Ubald1) (Mus musculus (Mouse)).